A 492-amino-acid polypeptide reads, in one-letter code: Putative methyl-accepting chemotaxis AlkN (492 aa).

A run of 2 helical transmembrane segments spans residues 9-29 and 159-179; these read FFLI…GMRL and YVYF…FLLM. The region spanning 180 to 231 is the HAMP domain; sequence KKTRSSIDEIVHVMNDMSRGDLTYRTIPSNDEVGKMQSSIIAMGAGVSALIE. The Methyl-accepting transducer domain maps to 236-472; the sequence is IQGDLFNSAG…DMLDNANIIR (237 aa).

It belongs to the methyl-accepting chemotaxis (MCP) protein family.

The protein localises to the membrane. Its pathway is hydrocarbon metabolism; alkane degradation. Chemotactic-signal transducers respond to changes in the concentration of attractants and repellents in the environment, transduce a signal from the outside to the inside of the cell, and facilitate sensory adaptation through the variation of the level of methylation. The chain is Putative methyl-accepting chemotaxis AlkN (alkN) from Ectopseudomonas oleovorans (Pseudomonas oleovorans).